An 89-amino-acid chain; its full sequence is MFKLAIILALLFFGARAGAVRDGYPILSDGCKYTCKPLGENQNCSRICKEKAGSWYGYCYMWACYCTDVSKKAVLFGDSGTPECHVWIK.

The signal sequence occupies residues 1–17; the sequence is MFKLAIILALLFFGARA. Residues 21–85 enclose the LCN-type CS-alpha/beta domain; the sequence is RDGYPILSDG…FGDSGTPECH (65 aa). Intrachain disulfides connect C31–C84, C35–C59, C44–C64, and C48–C66.

In terms of tissue distribution, expressed by the venom gland.

Its subcellular location is the secreted. The protein is Putative sodium channel toxin Ts30 of Tityus serrulatus (Brazilian scorpion).